The following is a 234-amino-acid chain: Bromodomain-containing protein DDB_G0271118 (234 aa).

The 60-residue stretch at 1 to 60 folds into the Bromo domain; that stretch reads MDLGTIKGELDNNGYSTIKDFTADVRLMFENALTYNADSSPIWKHAKTLLYFHRKHDEHV. Residues 134 to 194 show a composition bias toward low complexity; it reads NNNSNNNNNN…SSSSSSSSSS (61 aa). The interval 134–209 is disordered; the sequence is NNNSNNNNNN…KKYSDEERRN (76 aa).

This Dictyostelium discoideum (Social amoeba) protein is Bromodomain-containing protein DDB_G0271118.